A 129-amino-acid chain; its full sequence is F(420)H(2) dehydrogenase subunit A (129 aa).

Helical transmembrane passes span 9–29 (IIDS…MPPM), 64–84 (FNVE…EVLF), and 95–115 (HGIT…LLFG).

Belongs to the complex I subunit 3 family. The FPO complex is composed of at least 13 different subunits. FpoA, FpoH, FpoJ, FpoK, FpoL, FpoM and FpoN proteins constitute the membrane sector of the complex.

Its subcellular location is the cell membrane. It catalyses the reaction methanophenazine + reduced coenzyme F420-(gamma-L-Glu)(n) = dihydromethanophenazine + oxidized coenzyme F420-(gamma-L-Glu)(n) + H(+). Component of the F(420)H(2) dehydrogenase (FPO complex) which is part of the energy-conserving F(420)H(2):heterodisulfide oxidoreductase system. The membrane-bound electron transfer system of the complex plays an important role in the metabolism of methylotrophic methanogens when the organisms grow on methanol or methylamines. Catalyzes the oxidation of methanophenazine to dihydromethanophenazine. It shuttles electrons from F(420)H(2), via FAD and iron-sulfur (Fe-S) centers, to methanophenazine (an electron carrier in the membrane). It couples the redox reaction to proton translocation (for every two electrons transferred, two hydrogen ions are translocated across the cytoplasmic membrane), and thus conserves the redox energy in a proton gradient. It also catalyzes the oxidation of F(420)H(2) with quinones such as 2,3-dimethyl-1,4-naphthoquinone, 2-methyl-1,4-naphthoquinone and tetramethyl-p-benzoquinone. The sequence is that of F(420)H(2) dehydrogenase subunit A (fpoA) from Methanosarcina mazei (strain ATCC BAA-159 / DSM 3647 / Goe1 / Go1 / JCM 11833 / OCM 88) (Methanosarcina frisia).